The following is a 416-amino-acid chain: Tyrosine--tRNA ligase (416 aa).

Tyr-39 serves as a coordination point for L-tyrosine. A 'HIGH' region motif is present at residues 44 to 53 (CTASSLHVGS). The L-tyrosine site is built by Tyr-176 and Gln-180. Residues 236 to 240 (KMGKT) carry the 'KMSKS' region motif. Lys-239 provides a ligand contact to ATP. The region spanning 349 to 415 (ISLIDLLHDI…GKKRHIKVMV (67 aa)) is the S4 RNA-binding domain.

It belongs to the class-I aminoacyl-tRNA synthetase family. TyrS type 1 subfamily. As to quaternary structure, homodimer.

The protein resides in the cytoplasm. The enzyme catalyses tRNA(Tyr) + L-tyrosine + ATP = L-tyrosyl-tRNA(Tyr) + AMP + diphosphate + H(+). In terms of biological role, catalyzes the attachment of tyrosine to tRNA(Tyr) in a two-step reaction: tyrosine is first activated by ATP to form Tyr-AMP and then transferred to the acceptor end of tRNA(Tyr). This chain is Tyrosine--tRNA ligase, found in Wolbachia sp. subsp. Brugia malayi (strain TRS).